The chain runs to 457 residues: MDIREMDLKRQEANALFKKQMIDEALEIYKTSFLEATKSVVPGTRNDLLEEQLSLLAYNISVVYYKRKNFPKSLAFGLESLKHRKSDKVLCKICAIYLRLGMLREYKEMYDQMVTRSSGPEVAFLLKRMKLSEVIVEKHLEKRVTLESLHELSKEISGGRSIPADTLESILEQGESILLGCENVVHTESSGEVLIFGDTHGQYFDVVSILNKVFDKDRMVIFNGDYVDRGSHSVENFALLLSLKILFPGRVHLTRGNHELSDINRVYGFYDEVKRKYPFSSDSVYRRFQDAFRALPISIIVNEKVFITHGGLPEAPVKVDNLQEIYRMTDTHTDELLKGLLWSDPEEILGTEESKRRAGVVFGADVTARFLERNGLDLLVRSHQAVDDGYRVHHGGKVVTIFSAPEYEGSKGPGSYLVLNPSAGEADEIVEISPLTRYKAVKFGRSDGKEVLRLLCN.

Mn(2+) contacts are provided by aspartate 198, histidine 200, aspartate 225, and asparagine 257. Catalysis depends on histidine 258, which acts as the Proton donor. 2 residues coordinate Mn(2+): histidine 309 and histidine 383.

It belongs to the PPP phosphatase family. PP-1 subfamily. The cofactor is Mn(2+).

The catalysed reaction is O-phospho-L-seryl-[protein] + H2O = L-seryl-[protein] + phosphate. The enzyme catalyses O-phospho-L-threonyl-[protein] + H2O = L-threonyl-[protein] + phosphate. This Encephalitozoon cuniculi (strain GB-M1) (Microsporidian parasite) protein is Probable serine/threonine-protein phosphatase ECU05_0440.